A 371-amino-acid polypeptide reads, in one-letter code: 4-hydroxyphenylpyruvate dioxygenase-like protein (371 aa).

VOC domains follow at residues 7-135 (RLCH…LLQR) and 160-328 (HVDH…VFTK). Residues His163, His258, and Glu339 each coordinate Fe cation.

It belongs to the 4HPPD family. It depends on Fe cation as a cofactor.

The protein resides in the mitochondrion. The catalysed reaction is 3-(4-hydroxyphenyl)pyruvate + O2 = (S)-4-hydroxymandelate + CO2. Functionally, iron-dependent dioxygenase that catalyzes the conversion of 4-hydroxyphenylpyruvate (4-HPPA) to 4-hydroxymandelate (4-HMA) in the mitochondria, one of the steps in the biosynthesis of coenzyme Q10 from tyrosine. The protein is 4-hydroxyphenylpyruvate dioxygenase-like protein of Rattus norvegicus (Rat).